A 303-amino-acid polypeptide reads, in one-letter code: UDP-3-O-acyl-N-acetylglucosamine deacetylase (303 aa).

3 residues coordinate Zn(2+): His-79, His-238, and Asp-242. His-265 serves as the catalytic Proton donor.

The protein belongs to the LpxC family. The cofactor is Zn(2+).

The catalysed reaction is a UDP-3-O-[(3R)-3-hydroxyacyl]-N-acetyl-alpha-D-glucosamine + H2O = a UDP-3-O-[(3R)-3-hydroxyacyl]-alpha-D-glucosamine + acetate. It participates in glycolipid biosynthesis; lipid IV(A) biosynthesis; lipid IV(A) from (3R)-3-hydroxytetradecanoyl-[acyl-carrier-protein] and UDP-N-acetyl-alpha-D-glucosamine: step 2/6. Catalyzes the hydrolysis of UDP-3-O-myristoyl-N-acetylglucosamine to form UDP-3-O-myristoylglucosamine and acetate, the committed step in lipid A biosynthesis. In Pseudoalteromonas translucida (strain TAC 125), this protein is UDP-3-O-acyl-N-acetylglucosamine deacetylase.